The sequence spans 333 residues: MNDILNKEPMEEDYGIEKSLRPQFFNQYIGQDKVKEQLEIFIKAAKMREEVLDHVLLFGPPGLGKTTMAFVIANELGVNIKQTAGPAIEKPGDLVAILNELEPGDVLFIDEIHRMPMQVEEVLYSAMEDFYIDIMLGSGDGSRSVHLDLPPFTLVGATTRAGMLSNPLRARFGISSHMEYYQERDLEEIVKRTADIFEVEVIDNAAIEIALRSRGTPRIANRLLKRVRDFAQIMGDGRVDKAITDKALTILDVDAAGLDYIDQKILRTMIEMYHGGPVGIGTLAVNIAEDRETVEDMYEPYLIQKGFLMRTKQGRKVTQRAYEHLGYVYNEEE.

The segment at 1 to 181 (MNDILNKEPM…FGISSHMEYY (181 aa)) is large ATPase domain (RuvB-L). Residues leucine 20, arginine 21, glycine 62, lysine 65, threonine 66, threonine 67, 128 to 130 (EDF), arginine 171, tyrosine 181, and arginine 218 contribute to the ATP site. Residue threonine 66 coordinates Mg(2+). The tract at residues 182-252 (QERDLEEIVK…ITDKALTILD (71 aa)) is small ATPAse domain (RuvB-S). The head domain (RuvB-H) stretch occupies residues 255 to 333 (AAGLDYIDQK…HLGYVYNEEE (79 aa)). DNA-binding residues include arginine 291, arginine 310, and arginine 315.

Belongs to the RuvB family. As to quaternary structure, homohexamer. Forms an RuvA(8)-RuvB(12)-Holliday junction (HJ) complex. HJ DNA is sandwiched between 2 RuvA tetramers; dsDNA enters through RuvA and exits via RuvB. An RuvB hexamer assembles on each DNA strand where it exits the tetramer. Each RuvB hexamer is contacted by two RuvA subunits (via domain III) on 2 adjacent RuvB subunits; this complex drives branch migration. In the full resolvosome a probable DNA-RuvA(4)-RuvB(12)-RuvC(2) complex forms which resolves the HJ.

The protein resides in the cytoplasm. The enzyme catalyses ATP + H2O = ADP + phosphate + H(+). Its function is as follows. The RuvA-RuvB-RuvC complex processes Holliday junction (HJ) DNA during genetic recombination and DNA repair, while the RuvA-RuvB complex plays an important role in the rescue of blocked DNA replication forks via replication fork reversal (RFR). RuvA specifically binds to HJ cruciform DNA, conferring on it an open structure. The RuvB hexamer acts as an ATP-dependent pump, pulling dsDNA into and through the RuvAB complex. RuvB forms 2 homohexamers on either side of HJ DNA bound by 1 or 2 RuvA tetramers; 4 subunits per hexamer contact DNA at a time. Coordinated motions by a converter formed by DNA-disengaged RuvB subunits stimulates ATP hydrolysis and nucleotide exchange. Immobilization of the converter enables RuvB to convert the ATP-contained energy into a lever motion, pulling 2 nucleotides of DNA out of the RuvA tetramer per ATP hydrolyzed, thus driving DNA branch migration. The RuvB motors rotate together with the DNA substrate, which together with the progressing nucleotide cycle form the mechanistic basis for DNA recombination by continuous HJ branch migration. Branch migration allows RuvC to scan DNA until it finds its consensus sequence, where it cleaves and resolves cruciform DNA. This Lactococcus lactis subsp. cremoris (strain SK11) protein is Holliday junction branch migration complex subunit RuvB.